A 257-amino-acid chain; its full sequence is Alcohol dehydrogenase 1 (257 aa).

9–33 contributes to the NAD(+) binding site; it reads VFVGGLGFIGYEACKTLITRDLASL. Ser-137 is a binding site for substrate. Catalysis depends on Tyr-150, which acts as the Proton acceptor.

It belongs to the short-chain dehydrogenases/reductases (SDR) family. In terms of assembly, homodimer.

It catalyses the reaction a primary alcohol + NAD(+) = an aldehyde + NADH + H(+). It carries out the reaction a secondary alcohol + NAD(+) = a ketone + NADH + H(+). The polypeptide is Alcohol dehydrogenase 1 (ADH1) (Ceratitis cosyra (Mango fruit fly)).